A 345-amino-acid chain; its full sequence is Tropomodulin-4 (345 aa).

Residues 42–63 (NMLLPAGLRQRDQTKKSPTGPL) are disordered.

Belongs to the tropomodulin family. As to quaternary structure, binds to the N-terminus of tropomyosin and to actin. Highly expressed in skeletal muscle.

The protein resides in the cytoplasm. Its subcellular location is the cytoskeleton. Functionally, blocks the elongation and depolymerization of the actin filaments at the pointed end. The Tmod/TM complex contributes to the formation of the short actin protofilament, which in turn defines the geometry of the membrane skeleton. This Homo sapiens (Human) protein is Tropomodulin-4 (TMOD4).